A 596-amino-acid chain; its full sequence is Probable tripeptidyl-peptidase SED2 (596 aa).

An N-terminal signal peptide occupies residues 1–16 (MRLLKFVCLLASVAAA). A propeptide spans 17-203 (KPTPGASHKV…LESMSVEEFA (187 aa)) (removed in mature form). The region spanning 210-596 (LVTTACLREL…NFQALTKVLP (387 aa)) is the Peptidase S53 domain. N-linked (GlcNAc...) asparagine glycosylation is present at asparagine 265. Catalysis depends on charge relay system residues glutamate 286 and aspartate 290. N-linked (GlcNAc...) asparagine glycosylation is present at asparagine 403. Serine 501 acts as the Charge relay system in catalysis. Residues aspartate 543 and isoleucine 544 each contribute to the Ca(2+) site. A glycan (N-linked (GlcNAc...) asparagine) is linked at asparagine 572. Positions 576 and 578 each coordinate Ca(2+).

Requires Ca(2+) as cofactor.

The protein localises to the secreted. Its subcellular location is the extracellular space. The enzyme catalyses Release of an N-terminal tripeptide from a polypeptide.. Its function is as follows. Secreted tripeptidyl-peptidase which degrades proteins at acidic pHs and is involved in virulence. This chain is Probable tripeptidyl-peptidase SED2 (SED2), found in Arthroderma benhamiae (strain ATCC MYA-4681 / CBS 112371) (Trichophyton mentagrophytes).